Here is a 381-residue protein sequence, read N- to C-terminus: Glycerophosphocholine acyltransferase 1 (381 aa).

Over 1 to 63 (MANNEDSNSN…IAKQAEEHER (63 aa)) the chain is Cytoplasmic. Residues 64–84 (FINKVTHLVGVLGFGGFCFLL) traverse the membrane as a helical segment. Residues 85-89 (GARPQ) are Lumenal-facing. Residues 90-110 (DIPLVYCFFYVIFVPLRWIYY) form a helical membrane-spanning segment. Over 111–116 (RFKKWH) the chain is Cytoplasmic. Residues 117-137 (YYLLDFCYYANTIFLVDLLLY) form a helical membrane-spanning segment. Over 138–141 (PKNE) the chain is Lumenal. Residues 142-162 (KLFMVCFSFAEGPLAWAIIVW) form a helical membrane-spanning segment. The Cytoplasmic portion of the chain corresponds to 163–173 (RCSLVFSSPDK). The helical transmembrane segment at 174-194 (IVSVLIHLLPGLVFFTIRWWN) threads the bilayer. Topologically, residues 195 to 223 (PATFAAMHPVGTDRRVSWPYVEDKAYLFT) are lumenal. A helical transmembrane segment spans residues 224-244 (WLFLVPLVVYTLWQVLYFLIV). Residues 245-291 (NVLRRQRLLRDPEVMTSYRELSKKAEKANNKLWQLSGLLGDQNRIWM) lie on the Cytoplasmic side of the membrane. A helical membrane pass occupies residues 292–312 (YILFQAIFTVATMALTVPIFL). Residues 313 to 315 (SYR) are Lumenal-facing. The helical transmembrane segment at 316–336 (LHVIFQILKISAAVWNGGSFL) threads the bilayer. Topologically, residues 337-381 (LEVMPRQVIQKEKKKKAEMQPIEEQILHHEAVSHPTENEPKSTET) are cytoplasmic.

The protein belongs to the GPC1 family.

The protein resides in the membrane. The enzyme catalyses sn-glycerol 3-phosphocholine + an acyl-CoA = a 1-acyl-sn-glycero-3-phosphocholine + CoA. It catalyses the reaction sn-glycero-3-phosphoethanolamine + an acyl-CoA = a monoacyl-sn-glycero-3-phosphoethanolamine + CoA. It carries out the reaction sn-glycerol 3-phosphocholine + (9Z)-octadecenoyl-CoA = (9Z-octadecenoyl)-sn-glycero-3-phosphocholine + CoA. Glycerophosphocholine acyltransferase (GPCAT) that utilizes acyl-CoA to acylate glycero-3-phosphocholine (GPC), forming lysophosphatidylcholine (LPC). Shows broad acyl specificities with a preference for 16:0-CoA, polyunsaturated acyl-CoA, and the hydroxylated ricinoleoyl-CoA. Also catalyzes the acylation of glycero-3-phosphoethanolamine (GPE) with acyl-CoA. In addition to acyl-CoA, GPCAT efficiently utilizes LPC and lysophosphatidylethanolamine (LPE) as acyl donors in the acylation of GPC. Contributes to the maintenance of phosphatidylcholine (PC) homeostasis and might also have specific functions in acyl editing of PC, such as transferring acyl groups modified at the sn-2 position of PC to the sn-1. In Arabidopsis thaliana (Mouse-ear cress), this protein is Glycerophosphocholine acyltransferase 1.